Here is a 517-residue protein sequence, read N- to C-terminus: 2,4,6-trichlorophenol monooxygenase (517 aa).

It belongs to the FADH(2)-utilizing monooxygenase family. In terms of assembly, homotetramer in solution.

It catalyses the reaction 2,4,6-trichlorophenol + FADH2 + O2 = 2-chloro-6-hydroxy-1,4-benzoquinone + FAD + 2 chloride + 3 H(+). The catalysed reaction is 2,4,6-trichlorophenol + FADH2 + O2 = 2,6-dichlorobenzoquinone + FAD + chloride + H2O + H(+). It carries out the reaction 2,6-dichlorobenzoquinone + H2O = 2-chloro-6-hydroxy-1,4-benzoquinone + chloride + 2 H(+). The protein operates within aromatic compound metabolism. It functions in the pathway xenobiotic degradation. Functionally, involved in the degradation of 2,4,6-trichlorophenol (2,4,6-TCP). Catalyzes the conversion of 2,4,6-TCP to 6-chlorohydroxyquinol (6-CHQ). The monooxygenase oxidizes 2,4,6-TCP to 2,6-dichloroquinone (2,6-DCBQ), which remains with the enzyme and is hydrolyzed to 2-chlorohydroxyquinone. 2-chlorohydroxyquinone is chemically reduced by ascorbate and NADH to 6-chlorohydroxyquinol (6-CHQ). The chain is 2,4,6-trichlorophenol monooxygenase from Cupriavidus pinatubonensis (strain JMP 134 / LMG 1197) (Cupriavidus necator (strain JMP 134)).